A 104-amino-acid chain; its full sequence is Large ribosomal subunit protein uL24 (104 aa).

The protein belongs to the universal ribosomal protein uL24 family. Part of the 50S ribosomal subunit.

Functionally, one of two assembly initiator proteins, it binds directly to the 5'-end of the 23S rRNA, where it nucleates assembly of the 50S subunit. One of the proteins that surrounds the polypeptide exit tunnel on the outside of the subunit. The sequence is that of Large ribosomal subunit protein uL24 from Shewanella amazonensis (strain ATCC BAA-1098 / SB2B).